Here is a 35-residue protein sequence, read N- to C-terminus: uncharacterized protein (35 aa).

This is an uncharacterized protein from Haemophilus influenzae (strain ATCC 51907 / DSM 11121 / KW20 / Rd).